Here is a 316-residue protein sequence, read N- to C-terminus: Uracil-DNA glycosylase (316 aa).

Over residues 36 to 79 (AAAAAPAGAGAGASKPARPSAAARPAKGTPAASAATTATGADAS) the composition is skewed to low complexity. The interval 36-91 (AAAAAPAGAGAGASKPARPSAAARPAKGTPAASAATTATGADASAPPPDPGAPTWD) is disordered. The Proton acceptor role is filled by aspartate 159.

Belongs to the uracil-DNA glycosylase (UDG) superfamily. UNG family.

The protein localises to the host nucleus. The enzyme catalyses Hydrolyzes single-stranded DNA or mismatched double-stranded DNA and polynucleotides, releasing free uracil.. Its function is as follows. Excises uracil residues from the DNA which can arise as a result of misincorporation of dUMP residues by DNA polymerase or deamination of cytosines. Therefore may reduce deleterious uracil incorporation into the viral genome, particularly in terminally differentiated cells which lack DNA repair enzymes. This Sus scrofa (Pig) protein is Uracil-DNA glycosylase (UL2).